A 264-amino-acid polypeptide reads, in one-letter code: Acyl-[acyl-carrier-protein]--UDP-N-acetylglucosamine O-acyltransferase (264 aa).

Belongs to the transferase hexapeptide repeat family. LpxA subfamily. As to quaternary structure, homotrimer.

Its subcellular location is the cytoplasm. It catalyses the reaction a (3R)-hydroxyacyl-[ACP] + UDP-N-acetyl-alpha-D-glucosamine = a UDP-3-O-[(3R)-3-hydroxyacyl]-N-acetyl-alpha-D-glucosamine + holo-[ACP]. It functions in the pathway glycolipid biosynthesis; lipid IV(A) biosynthesis; lipid IV(A) from (3R)-3-hydroxytetradecanoyl-[acyl-carrier-protein] and UDP-N-acetyl-alpha-D-glucosamine: step 1/6. Its function is as follows. Involved in the biosynthesis of lipid A, a phosphorylated glycolipid that anchors the lipopolysaccharide to the outer membrane of the cell. The chain is Acyl-[acyl-carrier-protein]--UDP-N-acetylglucosamine O-acyltransferase from Rickettsia typhi (strain ATCC VR-144 / Wilmington).